A 110-amino-acid chain; its full sequence is uncharacterized protein (110 aa).

Positions 1 to 20 (MNQQNQKISNPQTPVPTTSE) are enriched in polar residues. Positions 1–24 (MNQQNQKISNPQTPVPTTSEMNDR) are disordered.

This is an uncharacterized protein from Bacillus subtilis (strain 168).